The following is a 421-amino-acid chain: Serine hydroxymethyltransferase (421 aa).

Residues Leu121 and 125 to 127 (GHL) each bind (6S)-5,6,7,8-tetrahydrofolate. The residue at position 229 (Lys229) is an N6-(pyridoxal phosphate)lysine.

This sequence belongs to the SHMT family. In terms of assembly, homodimer. It depends on pyridoxal 5'-phosphate as a cofactor.

Its subcellular location is the cytoplasm. It catalyses the reaction (6R)-5,10-methylene-5,6,7,8-tetrahydrofolate + glycine + H2O = (6S)-5,6,7,8-tetrahydrofolate + L-serine. The protein operates within one-carbon metabolism; tetrahydrofolate interconversion. It functions in the pathway amino-acid biosynthesis; glycine biosynthesis; glycine from L-serine: step 1/1. In terms of biological role, catalyzes the reversible interconversion of serine and glycine with tetrahydrofolate (THF) serving as the one-carbon carrier. This reaction serves as the major source of one-carbon groups required for the biosynthesis of purines, thymidylate, methionine, and other important biomolecules. Also exhibits THF-independent aldolase activity toward beta-hydroxyamino acids, producing glycine and aldehydes, via a retro-aldol mechanism. This chain is Serine hydroxymethyltransferase, found in Actinobacillus pleuropneumoniae serotype 7 (strain AP76).